Reading from the N-terminus, the 366-residue chain is Chaperone protein DnaJ (366 aa).

The 65-residue stretch at 5–69 (DYYEVLGVSK…QKRAQYDQFG (65 aa)) folds into the J domain. Residues 128–210 (GKELNVEIPV…CHGTGKVRKR (83 aa)) form a CR-type zinc finger. Residues C141, C144, C158, C161, C184, C187, C198, and C201 each coordinate Zn(2+). CXXCXGXG motif repeat units lie at residues 141–148 (CDTCHGSG), 158–165 (CKYCSGTG), 184–191 (CRHCSGTG), and 198–205 (CTTCHGTG).

The protein belongs to the DnaJ family. As to quaternary structure, homodimer. Requires Zn(2+) as cofactor.

It localises to the cytoplasm. In terms of biological role, participates actively in the response to hyperosmotic and heat shock by preventing the aggregation of stress-denatured proteins and by disaggregating proteins, also in an autonomous, DnaK-independent fashion. Unfolded proteins bind initially to DnaJ; upon interaction with the DnaJ-bound protein, DnaK hydrolyzes its bound ATP, resulting in the formation of a stable complex. GrpE releases ADP from DnaK; ATP binding to DnaK triggers the release of the substrate protein, thus completing the reaction cycle. Several rounds of ATP-dependent interactions between DnaJ, DnaK and GrpE are required for fully efficient folding. Also involved, together with DnaK and GrpE, in the DNA replication of plasmids through activation of initiation proteins. The protein is Chaperone protein DnaJ of Bacillus cytotoxicus (strain DSM 22905 / CIP 110041 / 391-98 / NVH 391-98).